A 62-amino-acid polypeptide reads, in one-letter code: Large ribosomal subunit protein bL28 (62 aa).

The protein belongs to the bacterial ribosomal protein bL28 family.

The protein is Large ribosomal subunit protein bL28 of Clostridioides difficile (strain 630) (Peptoclostridium difficile).